A 329-amino-acid polypeptide reads, in one-letter code: Glucokinase (329 aa).

Residue 13-18 coordinates ATP; it reads GDIGGT.

The protein belongs to the bacterial glucokinase family.

The protein resides in the cytoplasm. It catalyses the reaction D-glucose + ATP = D-glucose 6-phosphate + ADP + H(+). This Caulobacter sp. (strain K31) protein is Glucokinase.